We begin with the raw amino-acid sequence, 443 residues long: Ribitol-5-phosphate xylosyltransferase 1 (443 aa).

Topologically, residues 1–9 (MRLTRKRLC) are cytoplasmic. Residues 10–30 (SFLIALYCLFSLYAAYHVFFG) form a helical; Signal-anchor for type II membrane protein membrane-spanning segment. At 31-443 (RRRQAPAGSP…ESSFLMNNKS (413 aa)) the chain is on the extracellular side. Residues 35 to 76 (APAGSPRGLRKGAAPARERRGREQSTLESEEWNPWEGDEKNE) form a disordered region. Basic and acidic residues predominate over residues 50–59 (ARERRGREQS).

The protein belongs to the RXYLT1 family. As to quaternary structure, forms a complex composed of FKTN/fukutin, FKRP and RXYLT1/TMEM5.

It localises to the golgi apparatus membrane. The catalysed reaction is 3-O-[Rib-ol-P-Rib-ol-P-3-beta-D-GalNAc-(1-&gt;3)-beta-D-GlcNAc-(1-&gt;4)-(O-6-P-alpha-D-Man)]-Thr-[protein] + UDP-alpha-D-xylose = 3-O-[beta-D-Xyl-(1-&gt;4)-Rib-ol-P-Rib-ol-P-3-beta-D-GalNAc-(1-&gt;3)-beta-D-GlcNAc-(1-&gt;4)-(O-6-P-alpha-D-Man)]-Thr-[protein] + UDP + H(+). It participates in protein modification; protein glycosylation. In terms of biological role, acts as a UDP-D-xylose:ribitol-5-phosphate beta1,4-xylosyltransferase, which catalyzes the transfer of UDP-D-xylose to ribitol 5-phosphate (Rbo5P) to form the Xylbeta1-4Rbo5P linkage on O-mannosyl glycan. Participates in the biosynthesis of the phosphorylated O-mannosyl trisaccharide (N-acetylgalactosamine-beta-3-N-acetylglucosamine-beta-4-(phosphate-6-)mannose), a carbohydrate structure present in alpha-dystroglycan (DAG1), which is required for binding laminin G-like domain-containing extracellular proteins with high affinity. In Homo sapiens (Human), this protein is Ribitol-5-phosphate xylosyltransferase 1.